The primary structure comprises 333 residues: uncharacterized protein (333 aa).

Residues Asn-94–Ser-122 adopt a coiled-coil conformation.

This is an uncharacterized protein from Aquifex aeolicus (strain VF5).